A 906-amino-acid chain; its full sequence is Inter-alpha-trypsin inhibitor heavy chain H1 (906 aa).

The N-terminal stretch at Met1–Ala22 is a signal peptide. Positions Gln23 to Asn29 are excised as a propeptide. In terms of domain architecture, VIT spans Gly32–Glu161. The S-linked (Hex...) cysteine glycan is linked to Cys55. The residue at position 124 (Ser124) is a Phosphoserine. A VWFA domain is found at Asn287–Val470. 2 positions are modified to phosphothreonine: Thr397 and Thr402. N-linked (GlcNAc...) asparagine glycosylation occurs at Asn583. O-linked (GalNAc...) serine glycosylation is present at Ser643. Residue Thr648 is glycosylated (O-linked (GalNAc...) threonine). Asp667 is modified (aspartate 1-(chondroitin 4-sulfate)-ester). Residues Pro668–Phe906 constitute a propeptide that is removed on maturation. Asn745 carries an N-linked (GlcNAc...) asparagine glycan.

It belongs to the ITIH family. As to quaternary structure, I-alpha-I plasma protease inhibitors are assembled from one or two heavy chains (HC) and one light chain, bikunin. Inter-alpha-inhibitor (I-alpha-I) is composed of ITIH1/HC1, ITIH2/HC2 and bikunin. Interacts with TNFAIP6 (via Link and CUB domains). Heavy chains are linked to bikunin via chondroitin 4-sulfate esterified to the alpha-carboxyl of the C-terminal aspartate after propeptide cleavage. In terms of processing, the S-linked glycan is composed of two 6-carbon sugars, possibly Glc or Gal.

The protein localises to the secreted. May act as a carrier of hyaluronan in serum or as a binding protein between hyaluronan and other matrix protein, including those on cell surfaces in tissues to regulate the localization, synthesis and degradation of hyaluronan which are essential to cells undergoing biological processes. This chain is Inter-alpha-trypsin inhibitor heavy chain H1 (ITIH1), found in Bos taurus (Bovine).